We begin with the raw amino-acid sequence, 221 residues long: ATP phosphoribosyltransferase (221 aa).

It belongs to the ATP phosphoribosyltransferase family. Short subfamily. In terms of assembly, heteromultimer composed of HisG and HisZ subunits.

The protein localises to the cytoplasm. The catalysed reaction is 1-(5-phospho-beta-D-ribosyl)-ATP + diphosphate = 5-phospho-alpha-D-ribose 1-diphosphate + ATP. It participates in amino-acid biosynthesis; L-histidine biosynthesis; L-histidine from 5-phospho-alpha-D-ribose 1-diphosphate: step 1/9. Its function is as follows. Catalyzes the condensation of ATP and 5-phosphoribose 1-diphosphate to form N'-(5'-phosphoribosyl)-ATP (PR-ATP). Has a crucial role in the pathway because the rate of histidine biosynthesis seems to be controlled primarily by regulation of HisG enzymatic activity. This Anaeromyxobacter dehalogenans (strain 2CP-1 / ATCC BAA-258) protein is ATP phosphoribosyltransferase.